Consider the following 404-residue polypeptide: Probable protein phosphatase 1N (404 aa).

The PPM-type phosphatase domain maps to 59–319; it reads RFGASAVQGW…DNMTCMVVCF (261 aa). 4 residues coordinate Mn(2+): Asp96, Gly97, Asp267, and Asp310.

It belongs to the PP2C family. It depends on Mg(2+) as a cofactor. Mn(2+) serves as cofactor.

It catalyses the reaction O-phospho-L-seryl-[protein] + H2O = L-seryl-[protein] + phosphate. It carries out the reaction O-phospho-L-threonyl-[protein] + H2O = L-threonyl-[protein] + phosphate. The protein is Probable protein phosphatase 1N (Ppm1n) of Mus musculus (Mouse).